Here is a 158-residue protein sequence, read N- to C-terminus: Ribosome maturation factor RimP (158 aa).

This sequence belongs to the RimP family.

It localises to the cytoplasm. In terms of biological role, required for maturation of 30S ribosomal subunits. The sequence is that of Ribosome maturation factor RimP from Lactobacillus delbrueckii subsp. bulgaricus (strain ATCC 11842 / DSM 20081 / BCRC 10696 / JCM 1002 / NBRC 13953 / NCIMB 11778 / NCTC 12712 / WDCM 00102 / Lb 14).